The primary structure comprises 461 residues: Cysteine--tRNA ligase (461 aa).

Residue Cys-29 participates in Zn(2+) binding. The 'HIGH' region motif lies at 31 to 41; that stretch reads MTVYDLCHLGH. Residues Cys-213, His-238, and Glu-242 each contribute to the Zn(2+) site. The 'KMSKS' region signature appears at 270-274; the sequence is KMSKS. Lys-273 is an ATP binding site.

Belongs to the class-I aminoacyl-tRNA synthetase family. Monomer. Zn(2+) is required as a cofactor.

It localises to the cytoplasm. The enzyme catalyses tRNA(Cys) + L-cysteine + ATP = L-cysteinyl-tRNA(Cys) + AMP + diphosphate. In Delftia acidovorans (strain DSM 14801 / SPH-1), this protein is Cysteine--tRNA ligase.